Here is a 504-residue protein sequence, read N- to C-terminus: Transcriptional coactivator YAP1 (504 aa).

2 stretches are compositionally biased toward pro residues: residues 1 to 12 and 20 to 36; these read MDPGQQPPPQPA and PSQPPQGQGPPSGPGQP. The tract at residues 1-59 is disordered; the sequence is MDPGQQPPPQPAPQGQGQPPSQPPQGQGPPSGPGQPAPAATQAAPQAPPAGHQIVHVRG. Residues 37-51 are compositionally biased toward low complexity; the sequence is APAATQAAPQAPPAG. Serine 61 carries the phosphoserine; by LATS1 and LATS2 modification. At threonine 63 the chain carries Phosphothreonine. Positions 86–100 form a coiled coil; that stretch reads MRLRKLPDSFFKPPE. An N6-lactoyllysine modification is found at lysine 90. Residues 91–114 are disordered; that stretch reads LPDSFFKPPEPKSHSRQASTDAGT. Serine 105 is modified (phosphoserine). A Phosphoserine; by LATS1 and LATS2 modification is found at serine 109. Residue threonine 110 is modified to Phosphothreonine. Threonine 119 bears the Phosphothreonine; by MAPK8 and MAPK9 mark. Serine 127 carries the post-translational modification Phosphoserine; by LATS1 and LATS2. Phosphoserine occurs at positions 128 and 131. Residues 133–158 are disordered; the sequence is QLGAVSPGTLTPTGVVSGPAATPTAQ. Serine 138 is modified (phosphoserine; by MAPK8 and MAPK9). The residue at position 154 (threonine 154) is a Phosphothreonine; by MAPK8 and MAPK9. A Phosphoserine; by LATS1 and LATS2 modification is found at serine 164. 2 consecutive WW domains span residues 171-204 and 230-263; these read VPLPAGWEMAKTSSGQRYFLNHIDQTTTWQDPRK and GPLPDGWEQAMTQDGEIYYINHKNKTTSWLDPRL. Phosphoserine occurs at positions 274 and 289. 2 disordered regions span residues 275–309 and 355–407; these read QSAPVKQPPPLAPQSPQGGVMGGSNSNQQQQMRLQ and LEQD…MSSY. The tract at residues 291–504 is transactivation domain; it reads QGGVMGGSNS…LDKESFLTWL (214 aa). A coiled-coil region spans residues 298 to 359; it reads SNSNQQQQMR…SQLPTLEQDG (62 aa). Over residues 355 to 391 the composition is skewed to polar residues; the sequence is LEQDGGTQNPVSSPGMSQELRTMTTNSSDPFLNSGTY. Serine 367 is subject to Phosphoserine; by MAPK8 and MAPK9. Phosphoserine is present on residues serine 371, serine 381, serine 382, and serine 388. Serine 397 is modified (phosphoserine; by LATS1 and LATS2). Phosphoserine; by CK1 is present on residues serine 400 and serine 403. At tyrosine 407 the chain carries Phosphotyrosine; by ABL1. Threonine 412 is modified (phosphothreonine; by MAPK8 and MAPK9).

The protein belongs to the YAP1 family. As to quaternary structure, part of a complex when phosphorylated that contains DSG3, PKP1, YAP1 and YWHAG; the complex is required for localization of DSG3 and YAP1 to the cell membrane in keratinocytes. Binds to the SH3 domain of the YES kinase. Binds to WBP1 and WBP2. Binds, in vitro, through the WW1 domain, to neural isoforms of ENAH that contain the PPSY motif. The phosphorylated form interacts with YWHAB. Interacts (via WW domains) with LATS1 (via PPxY motif 2). Interacts with LATS2. Interacts with TEAD1, TEAD2, TEAD3 and TEAD4. Interacts with TP73. Interacts with RUNX1. Interacts with HCK. Interacts (via WW domains) with PTPN14 (via PPxY motif 2); this interaction leads to the cytoplasmic sequestration of YAP1 and inhibits its transcriptional coactivator activity. Interacts (when phosphorylated at Ser-127) with SMAD2, SMAD3 and WWTR1. Interacts with PRRG2 (via cytoplasmic domain). Interacts (via WW domains) with PRRG4 (via cytoplasmic domain). Interacts (phosphorylated) with CLDN18; the interaction sequesters YAP1 away from the nucleus and thereby restricts transcription of YAP1 target genes. Interacts with SMAD1. Interacts with AMOTL2, the interaction is required for ubiquitination of AMOTL2 and localization of YAP1 to tight junctions. Interacts with AMOT isoform 1; the interaction facilitates translocation of YAP1 to the cytoplasm and tight junctions. In terms of assembly, interacts (via WW domain 1) with isoform 3 of ERBB4 (via PPxY motif 2). Post-translationally, phosphorylated by LATS1 and LATS2; leading to cytoplasmic translocation and inactivation. Phosphorylated by ABL1; leading to YAP1 stabilization, enhanced interaction with TP73 and recruitment onto proapoptotic genes; in response to DNA damage. Phosphorylation at Ser-400 and Ser-403 by CK1 is triggered by previous phosphorylation at Ser-397 by LATS proteins and leads to YAP1 ubiquitination by SCF(beta-TRCP) E3 ubiquitin ligase and subsequent degradation. Phosphorylated at Thr-119, Ser-138, Thr-154, Ser-367 and Thr-412 by MAPK8/JNK1 and MAPK9/JNK2, which is required for the regulation of apoptosis by YAP1. Phosphorylated in the nucleus by PRP4K; phosphorylation leads to nuclear exclusion. In terms of processing, lactylation by AARS1 promotes nuclear localization and stabilization of YAP1, leading to increased Hippo signaling pathway. Delactylated by SIRT1. Ubiquitinated by SCF(beta-TRCP) E3 ubiquitin ligase. As to expression, increased expression seen in some liver and prostate cancers. Isoforms lacking the transactivation domain found in striatal neurons of patients with Huntington disease (at protein level).

It is found in the cytoplasm. The protein resides in the nucleus. Its subcellular location is the cell junction. It localises to the tight junction. The protein localises to the cell membrane. Transcriptional regulator with dual roles as a coactivator and corepressor. Critical downstream regulatory target in the Hippo signaling pathway, crucial for organ size control and tumor suppression by restricting proliferation and promoting apoptosis. The Hippo signaling pathway core involves a kinase cascade featuring STK3/MST2 and STK4/MST1, along with its regulatory partner SAV1, which phosphorylates and activates LATS1/2 in complex with their regulatory protein, MOB1. This activation leads to the phosphorylation and inactivation of the YAP1 oncoprotein and WWTR1/TAZ. Phosphorylation of YAP1 by LATS1/2 prevents its nuclear translocation, thereby regulating the expression of its target genes. The transcriptional regulation of gene expression requires TEAD transcription factors and modulates cell growth, anchorage-independent growth, and induction of epithelial-mesenchymal transition (EMT). Plays a key role in tissue tension and 3D tissue shape by regulating the cortical actomyosin network, acting via ARHGAP18, a Rho GTPase activating protein that suppresses F-actin polymerization. It also suppresses ciliogenesis by acting as a transcriptional corepressor of TEAD4 target genes AURKA and PLK1. In conjunction with WWTR1, regulates TGFB1-dependent SMAD2 and SMAD3 nuclear accumulation. Synergizes with WBP2 to enhance PGR activity. Functionally, activates the C-terminal fragment (CTF) of ERBB4 (isoform 3). This Homo sapiens (Human) protein is Transcriptional coactivator YAP1.